The chain runs to 311 residues: MTRVEELLSQIKNLKTEKNAIILGHNYMEYSVQLVSDFTGDSYDLAVKAMKTNAKIILFAGVYFMAEQASALNPNKKVLSPDPNAGCTLSDSLDVKTLQEYKEKYPNAPVVLYINTSIYAKALADYIVTSSTAVKVVQKLNADTILFGPDANLANYVQQKVPNKKIIKVPPNGRCIVHANYTKQLVELARKKYPNALLMAHPEAPLEILESADFVGSTNQMIQFSKENKNEEFIVATEIGMINALKIKNPSKKFYPLVTTEACACARCPYMNMINLEKVKRSLEEEVYEVKVPEDIAERVKRAFENTMKLL.

Residues His-25 and Ser-42 each contribute to the iminosuccinate site. Cys-87 is a [4Fe-4S] cluster binding site. Residues Tyr-113–Asn-115 and Ser-130 contribute to the iminosuccinate site. Cys-175 contributes to the [4Fe-4S] cluster binding site. Residues His-201–Glu-203 and Thr-218 each bind iminosuccinate. Cys-268 contacts [4Fe-4S] cluster.

It belongs to the quinolinate synthase family. Type 2 subfamily. It depends on [4Fe-4S] cluster as a cofactor.

It localises to the cytoplasm. The catalysed reaction is iminosuccinate + dihydroxyacetone phosphate = quinolinate + phosphate + 2 H2O + H(+). The protein operates within cofactor biosynthesis; NAD(+) biosynthesis; quinolinate from iminoaspartate: step 1/1. Catalyzes the condensation of iminoaspartate with dihydroxyacetone phosphate to form quinolinate. This Saccharolobus solfataricus (strain ATCC 35092 / DSM 1617 / JCM 11322 / P2) (Sulfolobus solfataricus) protein is Quinolinate synthase.